Reading from the N-terminus, the 214-residue chain is Cell division protein DamX (214 aa).

Composition is skewed to polar residues over residues 1–14 (GSGTPTEAQTQPQQ) and 43–53 (QGMTGAASTLP). The interval 1 to 133 (GSGTPTEAQT…SVQSAPGSHY (133 aa)) is disordered. A helical membrane pass occupies residues 44–65 (GMTGAASTLPTAPATVMSGAAA). Composition is skewed to low complexity over residues 78–97 (QQHKTPAKTAAAKPTATQHK) and 110–131 (SSTAKAGAVASSGSSVQSAPGS). Residues 127 to 204 (SAPGSHYTLQ…VQAKKPWVRP (78 aa)) form the SPOR domain.

It belongs to the DamX family.

Its subcellular location is the cell inner membrane. Its function is as follows. Non-essential cell division protein. The sequence is that of Cell division protein DamX from Serratia marcescens.